The sequence spans 473 residues: Fumarate hydratase class II (473 aa).

Substrate contacts are provided by residues 105–107 (SGT), 130–133 (HPND), 140–142 (SSN), and Thr188. His189 serves as the catalytic Proton donor/acceptor. Residue Ser319 is part of the active site. Residues Ser320 and 325 to 327 (KVN) each bind substrate.

It belongs to the class-II fumarase/aspartase family. Fumarase subfamily. In terms of assembly, homotetramer.

It localises to the cytoplasm. The enzyme catalyses (S)-malate = fumarate + H2O. It functions in the pathway carbohydrate metabolism; tricarboxylic acid cycle; (S)-malate from fumarate: step 1/1. Involved in the TCA cycle. Catalyzes the stereospecific interconversion of fumarate to L-malate. This chain is Fumarate hydratase class II, found in Xylella fastidiosa (strain Temecula1 / ATCC 700964).